A 286-amino-acid polypeptide reads, in one-letter code: 4-diphosphocytidyl-2-C-methyl-D-erythritol kinase (286 aa).

Lysine 12 is a catalytic residue. Residue 96–106 (PHGAGLGGGSA) coordinates ATP. Aspartate 138 is an active-site residue.

The protein belongs to the GHMP kinase family. IspE subfamily.

The catalysed reaction is 4-CDP-2-C-methyl-D-erythritol + ATP = 4-CDP-2-C-methyl-D-erythritol 2-phosphate + ADP + H(+). Its pathway is isoprenoid biosynthesis; isopentenyl diphosphate biosynthesis via DXP pathway; isopentenyl diphosphate from 1-deoxy-D-xylulose 5-phosphate: step 3/6. Catalyzes the phosphorylation of the position 2 hydroxy group of 4-diphosphocytidyl-2C-methyl-D-erythritol. The polypeptide is 4-diphosphocytidyl-2-C-methyl-D-erythritol kinase (Nitratidesulfovibrio vulgaris (strain ATCC 29579 / DSM 644 / CCUG 34227 / NCIMB 8303 / VKM B-1760 / Hildenborough) (Desulfovibrio vulgaris)).